The following is a 969-amino-acid chain: Surface protein P113 (969 aa).

An N-terminal signal peptide occupies residues 1–22; that stretch reads MKIPFFILHILLLQFLLCLIRC. Asn-207 carries N-linked (GlcNAc...) asparagine glycosylation. A disordered region spans residues 223 to 328; sequence IGDESTDSSS…TDTLVNNKEN (106 aa). Polar residues predominate over residues 229–241; it reads DSSSMEIQDSTSN. The N-linked (GlcNAc...) asparagine glycan is linked to Asn-268. The segment covering 300-311 has biased composition (basic and acidic residues); that stretch reads KNEDNKDLEHGS. Positions 312–325 are enriched in low complexity; it reads SNDVNNNTDTLVNN. Asn-317, Asn-360, Asn-661, and Asn-697 each carry an N-linked (GlcNAc...) asparagine glycan. A compositionally biased stretch (polar residues) spans 688-705; that stretch reads SSNFNIFDSNNTDQNNEQ. Positions 688–947 are disordered; sequence SSNFNIFDSN…NETNKTDNGS (260 aa). Positions 713 to 727 are enriched in low complexity; the sequence is QLLNNNNDDVLSESN. Over residues 728–749 the composition is skewed to basic and acidic residues; it reads NENKEKTSDDATHKETQEKSDQ. Residue Asn-779 is glycosylated (N-linked (GlcNAc...) asparagine). Residues 798 to 811 are compositionally biased toward acidic residues; it reads EGTEELQQNDEDAE. Residues 812–822 are compositionally biased toward basic and acidic residues; the sequence is SLTKENSKSEE. Positions 823–841 are enriched in acidic residues; the sequence is QENEDSTDAEAIDKEEVET. Basic and acidic residues predominate over residues 842–854; it reads EEKGKDEQKKDEQ. Residues 855-864 show a composition bias toward acidic residues; it reads KEQDEEEDGE. Asn-876 carries N-linked (GlcNAc...) asparagine glycosylation. Over residues 883-896 the composition is skewed to basic and acidic residues; that stretch reads EENKNEVKGEEHLQ. The span at 897–907 shows a compositional bias: low complexity; the sequence is GSEQSIEASES. Residues 908–917 show a composition bias toward basic and acidic residues; the sequence is SQKDETKETE. Residues 918–936 show a composition bias toward acidic residues; the sequence is DKEEYVNANDDESSEEDTT. A compositionally biased stretch (polar residues) spans 937–947; the sequence is PNETNKTDNGS. N-linked (GlcNAc...) asparagine glycans are attached at residues Asn-938, Asn-941, and Asn-945. Asn-945 carries GPI-anchor amidated asparagine lipidation. Positions 946–969 are cleaved as a propeptide — removed in mature form; sequence GSSFFFAMSNALLVILLLLFIEFL.

Forms a complex composed of RH5, P113 and human BSG/basigin; the complex bridges the merozoite and host erythrocyte membranes. Within the complex, interacts with RH5 (via N-terminus); the interaction tethers RH5 to the merozoite membrane.

The protein resides in the cell membrane. In terms of biological role, membrane receptor which tethers secreted RH5 to the merozoite membrane during merozoite invasion of host erythocytes. This Plasmodium falciparum (isolate 3D7) protein is Surface protein P113.